Reading from the N-terminus, the 94-residue chain is Integration host factor subunit beta (94 aa).

The protein belongs to the bacterial histone-like protein family. As to quaternary structure, heterodimer of an alpha and a beta chain.

This protein is one of the two subunits of integration host factor, a specific DNA-binding protein that functions in genetic recombination as well as in transcriptional and translational control. This is Integration host factor subunit beta from Pectobacterium atrosepticum (strain SCRI 1043 / ATCC BAA-672) (Erwinia carotovora subsp. atroseptica).